A 138-amino-acid polypeptide reads, in one-letter code: UPF0201 protein PYRAB09730 (138 aa).

Belongs to the UPF0201 family.

In Pyrococcus abyssi (strain GE5 / Orsay), this protein is UPF0201 protein PYRAB09730.